Here is a 383-residue protein sequence, read N- to C-terminus: Neuropeptide Y receptor type 1 (383 aa).

Over 1 to 44 the chain is Extracellular; the sequence is MNSTLSSQVENHSIYYNFSEKNSQFLAFENDDCHLPLAMIFTLA. Residues N2, N11, and N17 are each glycosylated (N-linked (GlcNAc...) asparagine). Residues 45-65 form a helical membrane-spanning segment; it reads LAYGAVIILGVSGNLALIIII. The Cytoplasmic segment spans residues 66 to 76; it reads LKQKEMRNVTN. Residues 77 to 97 traverse the membrane as a helical segment; sequence ILIVNLSFSDLLVAIMCLPFT. The Extracellular segment spans residues 98-116; sequence FVYTLMDHWVFGEVMCKLN. A disulfide bridge connects residues C113 and C198. A helical transmembrane segment spans residues 117–137; it reads PFVQCVSITVSIFSLVLIAVE. Residues 138–154 are Cytoplasmic-facing; sequence RHQLIINPRGWRPSNRH. The helical transmembrane segment at 155 to 175 threads the bilayer; it reads AYVGIAVIWVLAVASSLPFLI. Residues 176 to 211 lie on the Extracellular side of the membrane; sequence YQVLTDEPFQNVTLDAFKDKYVCFDKFLSDSHRLSY. The helical transmembrane segment at 212–232 threads the bilayer; sequence TTLLLVLQYFGPLCFIFICYF. The Cytoplasmic segment spans residues 233–260; sequence KIYIRLKRRNNMMDKMRDNKYRSSETKR. A helical transmembrane segment spans residues 261–281; it reads INVMLLSIVVAFAVCWLPLTI. Topologically, residues 282 to 299 are extracellular; that stretch reads FNTVFDWNHQIIATCNHN. The chain crosses the membrane as a helical span at residues 300–320; that stretch reads LLFLLCHLTAMISTCINPIFY. Over 321 to 383 the chain is Cytoplasmic; that stretch reads GFLNKNFQRD…KIHSDDNEKI (63 aa). Residue C338 is the site of S-palmitoyl cysteine attachment. S368 bears the Phosphoserine mark.

The protein belongs to the G-protein coupled receptor 1 family.

It localises to the cell membrane. In terms of biological role, receptor for neuropeptide Y and peptide YY. The polypeptide is Neuropeptide Y receptor type 1 (NPY1R) (Sus scrofa (Pig)).